A 387-amino-acid polypeptide reads, in one-letter code: MISMKKYDVVIIGAGPAGSYAAYMLAKSKINVLVIDKYSFPRYKPCAGGLTAKAFNSFDFPISKEVKYSTNSIVTSYKNQIFHNISGNKTLVKMIERKEFDDFLIKKAVDSGATFLDGMKVTEITWENAEFSIKTDSEFFRCNYLIGADGTNGIVNRTFNIVERDLYGFAVEINCPVSRDNIGKFNMTFDFGTVPNGYLWIFPKDEYVCVGAYTTNRKMKNIQKYLLDYIEKLGLVPESEKLKGHIIPYYGINYKQPDFPCVLVGDAAGFGEYWTGEGIYYAVKSGTIAAEVISSSIKSGIFDRQALQRRYQREIIRGLKLAYYIGKFFYGNLPLSFNLVMSYLPVGIMYESASRGLTFDQSFSKIHVALSSLILNKSHISNNKYHR.

The protein belongs to the geranylgeranyl reductase family. ChlP subfamily.

This is an uncharacterized protein from Methanosarcina barkeri (strain Fusaro / DSM 804).